Consider the following 461-residue polypeptide: MAVSLWQQCIGRLQDELSAQQFSMWIRPLQAEMDGDTLVLYAPNRFVLDWVRDKYINIINQFFTEQMGSNAPKLRFDIGSRPSARPVAPAPVAAKPVNRQTKAQVGTTSFNTQAEPIINPNHRSNINPTYQFDNFVEGKSNQLGKAAALQVSENPGGAYNPLFLYGGTGLGKTHLLHAVGNGIIKNNPNAKVVYMHSERFVQDMVKALQNNAIEEFKRYYRSVDALFIDDIQFFANKDRSQEEFFHTFNALLEGNHQIILTSDRYPKEIDGVEDRLKSRFGWGLTVAIEPPELETRVAILMRKAQESGINLPDEVAFFIAKRLRSNVRELEGALNRVIANANFTGRPITIDFVREALRDLLALQEKLVTIDNIQKTVAEYYKIKMADMLSKRRSRSVARPRQVAMALSKELTNQSLPEIGDAFGGRDHTTVLHACRKIAQLREESHDIKEDYANLIRTLSS.

The domain I, interacts with DnaA modulators stretch occupies residues 1–90; that stretch reads MAVSLWQQCI…RPSARPVAPA (90 aa). Positions 91 to 124 are domain II; it reads PVAAKPVNRQTKAQVGTTSFNTQAEPIINPNHRS. The interval 125–341 is domain III, AAA+ region; sequence NINPTYQFDN…GALNRVIANA (217 aa). Residues Gly-169, Gly-171, Lys-172, and Thr-173 each coordinate ATP. The interval 342–461 is domain IV, binds dsDNA; that stretch reads NFTGRPITID…YANLIRTLSS (120 aa).

This sequence belongs to the DnaA family. As to quaternary structure, oligomerizes as a right-handed, spiral filament on DNA at oriC.

The protein resides in the cytoplasm. Functionally, plays an essential role in the initiation and regulation of chromosomal replication. ATP-DnaA binds to the origin of replication (oriC) to initiate formation of the DNA replication initiation complex once per cell cycle. Binds the DnaA box (a 9 base pair repeat at the origin) and separates the double-stranded (ds)DNA. Forms a right-handed helical filament on oriC DNA; dsDNA binds to the exterior of the filament while single-stranded (ss)DNA is stabiized in the filament's interior. The ATP-DnaA-oriC complex binds and stabilizes one strand of the AT-rich DNA unwinding element (DUE), permitting loading of DNA polymerase. After initiation quickly degrades to an ADP-DnaA complex that is not apt for DNA replication. Binds acidic phospholipids. In Shewanella frigidimarina (strain NCIMB 400), this protein is Chromosomal replication initiator protein DnaA.